Here is a 381-residue protein sequence, read N- to C-terminus: Protein TRIGALACTOSYLDIACYLGLYCEROL 2, chloroplastic (381 aa).

The N-terminal 45 residues, M1 to R45, are a transit peptide targeting the chloroplast. Residues A46–E96 lie on the Stromal side of the membrane. Residues G97–L117 form a helical membrane-spanning segment. Over R118–L381 the chain is Chloroplast intermembrane.

As to quaternary structure, homomultimer. Substrate-binding subunit of the TGD complex, a lipid translocator at the inner chloroplast envelope membrane made of TGD1, TGD2 and TGD3. Interacts with TGD1 and TGD3 with an overall subunit stoichiometry of 2 TGD1, 2 TGD3 and 8 to 12 TGD2. Interacts with TGD5.

The protein localises to the plastid. The protein resides in the chloroplast inner membrane. In terms of biological role, component of a phosphatidic acid/lipid transport complex in the chloroplast envelope. Specifically binds phosphatidic acid (PA). Involved in lipid transfer from the endoplasmic reticulum (ER) to plastids, and necessary for thylakoids formation. The polypeptide is Protein TRIGALACTOSYLDIACYLGLYCEROL 2, chloroplastic (Arabidopsis thaliana (Mouse-ear cress)).